The chain runs to 456 residues: General transcription factor IIE subunit 1 (456 aa).

Residues 11-100 (LDDLVKMVIR…LWYIDYKHII (90 aa)) form the HTH TFE/IIEalpha-type domain. Residues 129–157 (CQTCHKVYTALDIPKLLNMDTGALACEIC) form a C4-type zinc finger. Residues 345-402 (ESAPDSGDADGNGSNSGSGGSTIEGNDGGNGEHQNKKMKLDDSQTVSSMSQSDDDGKD) are disordered. A compositionally biased stretch (low complexity) spans 347-357 (APDSGDADGNG). Residues 358 to 375 (SNSGSGGSTIEGNDGGNG) show a composition bias toward gly residues. Over residues 377-386 (HQNKKMKLDD) the composition is skewed to basic and acidic residues.

It belongs to the TFIIE alpha subunit family. As to quaternary structure, TFIIE is a tetramer of two alpha and two beta subunits.

It localises to the nucleus. In terms of biological role, recruits TFIIH to the initiation complex and stimulates the RNA polymerase II C-terminal domain kinase and DNA-dependent ATPase activities of TFIIH. Both TFIIH and TFIIE are required for promoter clearance by RNA polymerase. This Dictyostelium discoideum (Social amoeba) protein is General transcription factor IIE subunit 1 (gtf2e1-1).